The primary structure comprises 279 residues: Tryptophan prenyltransferase ComQ (279 aa).

Mg(2+) is bound by residues Asp-67 and Asp-71.

Belongs to the FPP/GGPP synthase family. It depends on Mg(2+) as a cofactor.

The protein resides in the cell membrane. It carries out the reaction L-tryptophyl-[protein] + (2E)-geranyl diphosphate = (2S,3R)-3-geranyl-2,3-dihydro-2,N(alpha)-cyclo-L-tryptophyl-[protein] + diphosphate. Its function is as follows. Part of a major quorum-sensing system that regulates the development of genetic competence. Involved in the maturation of the competence pheromone ComX. Acts by catalyzing the transfer of a geranyl group on the ComX pheromone. Cannot use farnesyl diphosphate (FPP). In Bacillus spizizenii (Bacillus subtilis subsp. spizizenii), this protein is Tryptophan prenyltransferase ComQ.